A 391-amino-acid polypeptide reads, in one-letter code: Terminal nucleotidyltransferase 5C (391 aa).

This sequence belongs to the TENT family. In terms of assembly, interacts with BCCIP and PABPC1; the interaction has no effect on TENT5C poly(A) polymerase function. Interacts with PLK4; this interaction leads to the TENT5C recruitment into the centrosome.

The protein localises to the nucleus. The protein resides in the cytoplasm. It is found in the cytoskeleton. It localises to the microtubule organizing center. Its subcellular location is the centrosome. The catalysed reaction is RNA(n) + ATP = RNA(n)-3'-adenine ribonucleotide + diphosphate. Catalyzes the transfer of one adenosine molecule from an ATP to an mRNA poly(A) tail bearing a 3'-OH terminal group and enhances mRNA stability and gene expression. Can also elongate RNA oligos ending with uridine molecule, provided that the sequence is adenosine-rich. Mainly targets mRNAs encoding endoplasmic reticulum-targeted protein. In Macaca fascicularis (Crab-eating macaque), this protein is Terminal nucleotidyltransferase 5C.